We begin with the raw amino-acid sequence, 60 residues long: Large ribosomal subunit protein uL30 (60 aa).

Belongs to the universal ribosomal protein uL30 family. Part of the 50S ribosomal subunit.

The chain is Large ribosomal subunit protein uL30 from Dehalococcoides mccartyi (strain ATCC BAA-2100 / JCM 16839 / KCTC 5957 / BAV1).